The following is a 261-amino-acid chain: 5'-nucleotidase SurE (261 aa).

A divalent metal cation contacts are provided by aspartate 8, aspartate 9, serine 39, and asparagine 94.

It belongs to the SurE nucleotidase family. A divalent metal cation is required as a cofactor.

The protein resides in the cytoplasm. It carries out the reaction a ribonucleoside 5'-phosphate + H2O = a ribonucleoside + phosphate. Nucleotidase that shows phosphatase activity on nucleoside 5'-monophosphates. The sequence is that of 5'-nucleotidase SurE from Archaeoglobus fulgidus (strain ATCC 49558 / DSM 4304 / JCM 9628 / NBRC 100126 / VC-16).